The chain runs to 158 residues: Male-specific protein scotti (158 aa).

The tract at residues N24–A43 is disordered. Residues G30–D42 are compositionally biased toward acidic residues.

This sequence belongs to the male-specific scotti family.

Post-meiotically transcribed gene that has a role in late spermiogenesis; required for actin cone progression during spermatid individualization. The protein is Male-specific protein scotti of Drosophila virilis (Fruit fly).